Here is a 582-residue protein sequence, read N- to C-terminus: uncharacterized protein (582 aa).

6 consecutive transmembrane segments (helical) span residues 17–37 (VAML…LPTV), 57–77 (LGAV…GAVY), 131–151 (MTAT…IMAI), 156–176 (ALTW…YWII), 239–259 (ALML…LIWF), and 271–291 (VGSL…VLMA). The 284-residue stretch at 17–300 (VAMLMMLQLV…ATMTLAVLPR (284 aa)) folds into the ABC transmembrane type-1 domain. The region spanning 335 to 571 (VRLAGATFTY…CPTYAEFAAS (237 aa)) is the ABC transporter domain. An ATP-binding site is contributed by 369-376 (GSTGSGKS).

This sequence belongs to the ABC transporter superfamily.

It is found in the cell membrane. This is an uncharacterized protein from Mycobacterium tuberculosis (strain CDC 1551 / Oshkosh).